Reading from the N-terminus, the 141-residue chain is Large ribosomal subunit protein uL11 (141 aa).

This sequence belongs to the universal ribosomal protein uL11 family. In terms of assembly, part of the ribosomal stalk of the 50S ribosomal subunit. Interacts with L10 and the large rRNA to form the base of the stalk. L10 forms an elongated spine to which L12 dimers bind in a sequential fashion forming a multimeric L10(L12)X complex. In terms of processing, one or more lysine residues are methylated.

Its function is as follows. Forms part of the ribosomal stalk which helps the ribosome interact with GTP-bound translation factors. The polypeptide is Large ribosomal subunit protein uL11 (Fervidobacterium nodosum (strain ATCC 35602 / DSM 5306 / Rt17-B1)).